A 220-amino-acid chain; its full sequence is Chloramphenicol acetyltransferase (220 aa).

Residue histidine 187 is the Proton acceptor of the active site.

The protein belongs to the chloramphenicol acetyltransferase family. As to quaternary structure, homotrimer.

The catalysed reaction is chloramphenicol + acetyl-CoA = chloramphenicol 3-acetate + CoA. Functionally, this enzyme is an effector of chloramphenicol resistance in bacteria. The polypeptide is Chloramphenicol acetyltransferase (cat86) (Bacillus pumilus (Bacillus mesentericus)).